The primary structure comprises 270 residues: MKQLSNLFDMKKNSEKITMVTSYDYPSAKQAEAAEIDTILVGDSLGMTVLGYDSTVQVTLNDMIHHGKAVRRGAPNTFVVVDLPIGTVGISDEKDLENALRLYQETKANAVKAEGAHLISFITKASAMGIPVVSHLGLTPQSVGIMGYKMQGSTKEAAKQLISDAEAVQEAGAVMLVLEAVPSDLAALISERLDIPVIGIGAGKGTDGQVLVYHDMLNYGQEHRAKFVKQYGDFSNGIEALQQYHKEVREGDFPSEAYTYKKQILEELDK.

Mg(2+) is bound by residues D43 and D82. 3-methyl-2-oxobutanoate-binding positions include 43–44 (DS), D82, and K112. E114 provides a ligand contact to Mg(2+). E179 serves as the catalytic Proton acceptor.

The protein belongs to the PanB family. As to quaternary structure, homodecamer; pentamer of dimers. The cofactor is Mg(2+).

It is found in the cytoplasm. The catalysed reaction is 3-methyl-2-oxobutanoate + (6R)-5,10-methylene-5,6,7,8-tetrahydrofolate + H2O = 2-dehydropantoate + (6S)-5,6,7,8-tetrahydrofolate. It functions in the pathway cofactor biosynthesis; (R)-pantothenate biosynthesis; (R)-pantoate from 3-methyl-2-oxobutanoate: step 1/2. Functionally, catalyzes the reversible reaction in which hydroxymethyl group from 5,10-methylenetetrahydrofolate is transferred onto alpha-ketoisovalerate to form ketopantoate. This chain is 3-methyl-2-oxobutanoate hydroxymethyltransferase, found in Staphylococcus carnosus (strain TM300).